The following is a 176-amino-acid chain: Flavodoxin (176 aa).

In terms of domain architecture, Flavodoxin-like spans 4–172 (IGIFFGTDTG…RLASWLEEIK (169 aa)).

It belongs to the flavodoxin family. It depends on FMN as a cofactor.

Its function is as follows. Low-potential electron donor to a number of redox enzymes. NifF is the electron donor to nitrogenase. In Klebsiella pneumoniae, this protein is Flavodoxin (nifF).